The primary structure comprises 251 residues: Phosphosulfolactate synthase (251 aa).

Belongs to the phosphosulfolactate synthase family. Homotrimer. Mg(2+) serves as cofactor.

The enzyme catalyses (2R)-O-phospho-3-sulfolactate = phosphoenolpyruvate + sulfite + H(+). Its pathway is cofactor biosynthesis; coenzyme M biosynthesis; sulfoacetaldehyde from phosphoenolpyruvate and sulfite: step 1/4. Its function is as follows. Catalyzes the addition of sulfite to phosphoenolpyruvate (PEP) to yield (2R)-phospho-3-sulfolactate (PSL). In Methanocaldococcus jannaschii (strain ATCC 43067 / DSM 2661 / JAL-1 / JCM 10045 / NBRC 100440) (Methanococcus jannaschii), this protein is Phosphosulfolactate synthase (comA).